We begin with the raw amino-acid sequence, 465 residues long: Sorting nexin-8 (465 aa).

Over residues 1–19 (MTGRAMDPLPAAAVGAAAE) the composition is skewed to low complexity. The disordered stretch occupies residues 1 to 36 (MTGRAMDPLPAAAVGAAAEAEADEEADPPASDLPTP). The PX domain maps to 73–181 (ARDTVQVELI…KLFLSFSGSD (109 aa)). R109, K135, and R148 together coordinate a 1,2-diacyl-sn-glycero-3-phospho-(1D-myo-inositol-3-phosphate). T452 bears the Phosphothreonine mark. S456 is modified (phosphoserine).

Belongs to the sorting nexin family.

The protein localises to the early endosome membrane. May be involved in several stages of intracellular trafficking. May play a role in intracellular protein transport from early endosomes to the trans-Golgi network. In Homo sapiens (Human), this protein is Sorting nexin-8 (SNX8).